A 406-amino-acid polypeptide reads, in one-letter code: Peptidyl-alpha-hydroxyglycine alpha-amidating lyase 2 (406 aa).

Residues 1-19 (MSRLLFVALLAISLGYVAS) form the signal peptide. NHL repeat units lie at residues 168 to 209 (GAIK…FKPF), 218 to 261 (GKRF…FNAA), 264 to 308 (LLRT…PKAG), and 358 to 402 (DPRS…RVWK). Cystine bridges form between Cys-231/Cys-251 and Cys-293/Cys-304.

The protein belongs to the peptidyl-alpha-hydroxyglycine alpha-amidating lyase family. Requires Zn(2+) as cofactor. Post-translationally, N-glycosylated. In terms of tissue distribution, only found in a subset of neurons distributed throughout all levels of the central nervous system (CNS). Present in at least some neuroendocrine cells. In adult brains, it is only present in a small handful of cells, the majority of which being distributed in distal parts of the medulla, with a higher expression in the posterior surface of the brain (at protein level).

The protein resides in the secreted. It carries out the reaction a [peptide]-C-terminal (2S)-2-hydroxyglycine = a [peptide]-C-terminal amide + glyoxylate. Peptidyl-alpha-hydroxylglycine alpha-amidating lyase that catalyzes an essential reaction in C-terminal alpha-amidation of peptides. Mediates the dismutation of the unstable peptidyl(2-hydroxyglycine) intermediate to glyoxylate and the corresponding desglycine peptide amide. C-terminal amidation of peptides such as neuropeptides is essential for full biological activity. The chain is Peptidyl-alpha-hydroxyglycine alpha-amidating lyase 2 (Pal2) from Drosophila melanogaster (Fruit fly).